A 345-amino-acid polypeptide reads, in one-letter code: Very-long-chain 3-oxoacyl-CoA reductase (345 aa).

Residues 26–46 (GAAVLLTTGTLFIASRVLTFV) traverse the membrane as a helical segment. NADP(+) contacts are provided by Val71, Asp125, Asp133, Asn152, Tyr219, Lys223, Ile252, and Ser254. Residue Tyr219 is the Proton donor of the active site. Catalysis depends on Lys223, which acts as the Lowers pKa of active site Tyr.

It belongs to the short-chain dehydrogenases/reductases (SDR) family.

Its subcellular location is the endoplasmic reticulum membrane. The enzyme catalyses a very-long-chain (3R)-3-hydroxyacyl-CoA + NADP(+) = a very-long-chain 3-oxoacyl-CoA + NADPH + H(+). Its pathway is lipid metabolism; fatty acid biosynthesis. Component of the microsomal membrane bound fatty acid elongation system, which produces the 26-carbon very long-chain fatty acids (VLCFA) from palmitate. Catalyzes the reduction of the 3-ketoacyl-CoA intermediate that is formed in each cycle of fatty acid elongation. VLCFAs serve as precursors for ceramide and sphingolipids. This is Very-long-chain 3-oxoacyl-CoA reductase from Aspergillus fumigatus (strain CBS 144.89 / FGSC A1163 / CEA10) (Neosartorya fumigata).